The chain runs to 246 residues: Nodulation protein G (246 aa).

8–32 (VTGAMGGLGTAICQALAKDGCIVAA) is an NAD(+) binding site. S140 serves as a coordination point for substrate. Y153 (proton acceptor) is an active-site residue.

This sequence belongs to the short-chain dehydrogenases/reductases (SDR) family.

In terms of biological role, proposed to modify Nod factor fatty acyl chain. The sequence is that of Nodulation protein G (nodG) from Azospirillum brasilense.